A 373-amino-acid polypeptide reads, in one-letter code: Velvet complex subunit RYP3 (373 aa).

Positions 1-10 (MYTLKQDRPH) are enriched in basic and acidic residues. 2 disordered regions span residues 1–26 (MYTL…LQHG) and 344–373 (RKDG…ENEG). In terms of domain architecture, Velvet spans 48–344 (VYEGRIYSLD…AFQGIKIPIR (297 aa)). Over residues 364 to 373 (GEGEDWENEG) the composition is skewed to acidic residues.

This sequence belongs to the velvet family. VelB subfamily. Component of the heterotrimeric velvet complex composed of LAE1, VEL1 and VEL2; VEL1A acting as a bridging protein between LAE1 and VEL2. Forms a heterodimeric complex with VOS1; the formation of the VEL2-VOS1 complex is light-dependent.

The protein resides in the nucleus. It localises to the cytoplasm. In terms of biological role, component of the velvet transcription factor complex that controls sexual/asexual developmental ratio in response to light, promoting sexual development in the darkness while stimulating asexual sporulation under illumination. The velvet complex acts as a global regulator for secondary metabolite gene expression. Component of the RYP2-RYP3 heterodimeric complex that plays a dual role in activating genes associated with spore maturation and repressing certain development-associated genes. The complex binds DNA through the DNA-binding domain of RYP2 that recognizes an 11-nucleotide consensus sequence 5'-CTGGCCGCGGC-3' consisting of two motifs in the promoters of key developmental regulatory genes. Required for viable spore production and regulation of sporulation in response to temperature, as well as for the switch to yeast-form in the presence of host cells. The chain is Velvet complex subunit RYP3 (RYP3) from Ajellomyces capsulatus (Darling's disease fungus).